The following is a 411-amino-acid chain: Serpin A3-1 (411 aa).

The N-terminal stretch at 1–24 (MRAERTSFLLALGLLVAGIRSVHC) is a signal peptide. N-linked (GlcNAc...) asparagine glycosylation is found at asparagine 100, asparagine 180, asparagine 230, and asparagine 264.

This sequence belongs to the serpin family. As to quaternary structure, homodimer. Post-translationally, N-glycosylated. Detected in all tissues examined (at protein level). Abundantly expressed in liver, kidney and spleen. Lowest levels were observed in diaphragm muscle.

Its subcellular location is the cytoplasmic vesicle. The protein resides in the secretory vesicle. It is found in the chromaffin granule. The protein localises to the secreted. In terms of biological role, potent inhibitor of the serine proteases elastase and trypsin. Moderately inhibits the serine proteases plasmin and chymotrypsin, and the thiol protease proenkephalin-processing enzyme. Does not inhibit the serine proteases cathepsin G, furin, kallikrein, thrombin, tissue plasminogen activator and urokinase, or the cysteine proteases cathepsin B, cathepsin L and papain. This Bos taurus (Bovine) protein is Serpin A3-1.